Here is a 727-residue protein sequence, read N- to C-terminus: Translation initiation factor IF-2, mitochondrial (727 aa).

The N-terminal 29 residues, 1 to 29 (MNQKLLKLENLLRFHTIYRQLHSLCQRRA), are a transit peptide targeting the mitochondrion. Residues 178 to 348 (PRSPVVTIMG…VALAEMLELK (171 aa)) form the tr-type G domain. The tract at residues 187-194 (GHVDHGKT) is G1. 187-194 (GHVDHGKT) contributes to the GTP binding site. Positions 212-216 (GITQH) are G2. Residues 234 to 237 (DTPG) and 288 to 291 (NKCD) each bind GTP. Residues 234–237 (DTPG) are G3. Residues 288 to 291 (NKCD) are G4. The interval 324 to 326 (SAL) is G5. T688 carries the phosphothreonine modification.

This sequence belongs to the TRAFAC class translation factor GTPase superfamily. Classic translation factor GTPase family. IF-2 subfamily. In terms of assembly, monomer. In terms of tissue distribution, expressed in all tissues examined. Highest level in skeletal muscle.

The protein localises to the mitochondrion. In terms of biological role, one of the essential components for the initiation of protein synthesis. Protects formylmethionyl-tRNA from spontaneous hydrolysis and promotes its binding to the 30S ribosomal subunits. Also involved in the hydrolysis of GTP during the formation of the 70S ribosomal complex. This is Translation initiation factor IF-2, mitochondrial (MTIF2) from Homo sapiens (Human).